A 159-amino-acid polypeptide reads, in one-letter code: NAD(P)H-quinone oxidoreductase subunit N (159 aa).

Belongs to the complex I NdhN subunit family. NDH-1 can be composed of about 15 different subunits; different subcomplexes with different compositions have been identified which probably have different functions.

Its subcellular location is the cell inner membrane. The catalysed reaction is a plastoquinone + NADH + (n+1) H(+)(in) = a plastoquinol + NAD(+) + n H(+)(out). It catalyses the reaction a plastoquinone + NADPH + (n+1) H(+)(in) = a plastoquinol + NADP(+) + n H(+)(out). NDH-1 shuttles electrons from an unknown electron donor, via FMN and iron-sulfur (Fe-S) centers, to quinones in the respiratory and/or the photosynthetic chain. The immediate electron acceptor for the enzyme in this species is believed to be plastoquinone. Couples the redox reaction to proton translocation, and thus conserves the redox energy in a proton gradient. Cyanobacterial NDH-1 also plays a role in inorganic carbon-concentration. The polypeptide is NAD(P)H-quinone oxidoreductase subunit N (Gloeobacter violaceus (strain ATCC 29082 / PCC 7421)).